A 207-amino-acid polypeptide reads, in one-letter code: A-type ATP synthase subunit E (207 aa).

The protein belongs to the V-ATPase E subunit family. Has multiple subunits with at least A(3), B(3), C, D, E, F, H, I and proteolipid K(x).

The protein localises to the cell membrane. Component of the A-type ATP synthase that produces ATP from ADP in the presence of a proton gradient across the membrane. The protein is A-type ATP synthase subunit E of Methanosphaera stadtmanae (strain ATCC 43021 / DSM 3091 / JCM 11832 / MCB-3).